The sequence spans 277 residues: UPF0496 protein At3g48650 (277 aa).

Helical transmembrane passes span 124–144 (YIFFAAALLSVLALWIYLGAV) and 145–165 (SLVVAAKVVIEVATPSIAPLW).

It belongs to the UPF0496 family.

It localises to the membrane. The chain is UPF0496 protein At3g48650 from Arabidopsis thaliana (Mouse-ear cress).